The chain runs to 637 residues: Galactofuranosyltransferase GlfT2 (637 aa).

Positions 171, 200, 229, and 256 each coordinate UDP-alpha-D-galactofuranose. The Mn(2+) site is built by D256 and D258. D372 acts as the Proton acceptor in catalysis. H396 contacts Mn(2+).

This sequence belongs to the glycosyltransferase 2 family. As to quaternary structure, homotetramer. The cofactor is Mn(2+). Requires Mg(2+) as cofactor.

It localises to the cell membrane. It carries out the reaction beta-D-galactofuranosyl-(1-&gt;5)-beta-D-galactofuranosyl-(1-&gt;4)-alpha-L-rhamnosyl-(1-&gt;3)-N-acetyl-alpha-D-glucosaminyl-diphospho-trans,octa-cis-decaprenol + 28 UDP-alpha-D-galactofuranose = [beta-D-galactofuranosyl-(1-&gt;5)-beta-D-galactofuranosyl-(1-&gt;6)]14-beta-D-galactofuranosyl-(1-&gt;5)-beta-D-galactofuranosyl-(1-&gt;4)-alpha-L-rhamnopyranosyl-(1-&gt;3)-N-acetyl-alpha-D-glucosaminyl-diphospho-trans,octa-cis-decaprenol + 28 UDP + 28 H(+). It functions in the pathway cell wall biogenesis; cell wall polysaccharide biosynthesis. In terms of biological role, involved in the galactan polymerization of the arabinogalactan (AG) region of the mycolylarabinogalactan-peptidoglycan (mAGP) complex, an essential component of the mycobacteria cell wall. Thus, successively transfers approximately 28 galactofuranosyl (Galf) residues from UDP-galactofuranose (UDP-Galf) onto the galactofuranosyl-galactofuranosyl-rhamnosyl-GlcNAc-diphospho-decaprenol (Galf-Galf-Rha-GlcNAc-PP-C50) acceptor produced by GlfT1, with alternating 1-&gt;5 and 1-&gt;6 links, forming a galactan domain with approximately 30 galactofuranosyl residues. This is Galactofuranosyltransferase GlfT2 from Mycobacterium tuberculosis (strain ATCC 25618 / H37Rv).